The sequence spans 120 residues: MKRTGPTDPNLRRLIRFLKKKSNEEGVKIWKDLAWRLERPRRQRAEVNVSKINRYAKDGDMIVVPGSVLGAGKLEKKVIVAAWKFSETARKKITEAGGEAITIEELIERNPKGSGVIIME.

It belongs to the eukaryotic ribosomal protein eL18 family.

This Pyrococcus horikoshii (strain ATCC 700860 / DSM 12428 / JCM 9974 / NBRC 100139 / OT-3) protein is Large ribosomal subunit protein eL18.